We begin with the raw amino-acid sequence, 125 residues long: Ribosome-binding factor A (125 aa).

It belongs to the RbfA family. Monomer. Binds 30S ribosomal subunits, but not 50S ribosomal subunits or 70S ribosomes.

The protein localises to the cytoplasm. Its function is as follows. One of several proteins that assist in the late maturation steps of the functional core of the 30S ribosomal subunit. Associates with free 30S ribosomal subunits (but not with 30S subunits that are part of 70S ribosomes or polysomes). Required for efficient processing of 16S rRNA. May interact with the 5'-terminal helix region of 16S rRNA. The protein is Ribosome-binding factor A of Akkermansia muciniphila (strain ATCC BAA-835 / DSM 22959 / JCM 33894 / BCRC 81048 / CCUG 64013 / CIP 107961 / Muc).